The chain runs to 887 residues: ABC transporter A family member 10 (887 aa).

Transmembrane regions (helical) follow at residues 38-58 (GIQY…VITL), 198-218 (YLYV…LLVT), 245-265 (IIIV…VVLY), 277-297 (VMLF…GIIL), 309-329 (AISS…QFYL), 335-355 (SSWL…EFLY), and 376-396 (ISFL…WYIT). The segment covering 443–469 (NNCNNNNTSPSSSSSSQSSPLNKPLLS) has biased composition (low complexity). The tract at residues 443–474 (NNCNNNNTSPSSSSSSQSSPLNKPLLSGDSDD) is disordered. One can recognise an ABC transporter domain in the interval 481–728 (IRLVNLKKTY…FNLGYILTIV (248 aa)). 519 to 526 (GQNGSGKT) is a binding site for ATP. The segment covering 774 to 797 (NNNNNENNSNNSDGSSSSSDSSSS) has biased composition (low complexity). A disordered region spans residues 774 to 799 (NNNNNENNSNNSDGSSSSSDSSSSKD).

This sequence belongs to the ABC transporter superfamily. ABCA family.

It localises to the membrane. This Dictyostelium discoideum (Social amoeba) protein is ABC transporter A family member 10 (abcA10).